The following is a 499-amino-acid chain: Phenylalanine--tRNA ligase alpha subunit (499 aa).

L-phenylalanine is bound by residues T342, 381–383, and F422; that span reads QID. Residue E424 participates in Mg(2+) binding. L-phenylalanine is bound at residue F447.

Belongs to the class-II aminoacyl-tRNA synthetase family. Phe-tRNA synthetase alpha subunit type 2 subfamily. Tetramer of two alpha and two beta subunits. It depends on Mg(2+) as a cofactor.

It is found in the cytoplasm. The enzyme catalyses tRNA(Phe) + L-phenylalanine + ATP = L-phenylalanyl-tRNA(Phe) + AMP + diphosphate + H(+). The chain is Phenylalanine--tRNA ligase alpha subunit from Thermococcus gammatolerans (strain DSM 15229 / JCM 11827 / EJ3).